We begin with the raw amino-acid sequence, 644 residues long: Tripeptidyl-peptidase sed1 (644 aa).

The N-terminal stretch at 1–18 is a signal peptide; sequence MRLSHVLLGTAAAAGVLA. Residues 19-196 constitute a propeptide, removed in mature form; the sequence is SPTPNDYVVH…KARSIEKRSF (178 aa). One can recognise a Peptidase S53 domain in the interval 224 to 643; the sequence is AITPLCISAL…PALLDLFMSL (420 aa). The N-linked (GlcNAc...) asparagine glycan is linked to Asn-235. Catalysis depends on charge relay system residues Glu-300 and Asp-304. N-linked (GlcNAc...) asparagine glycans are attached at residues Asn-326, Asn-332, and Asn-519. The active-site Charge relay system is Ser-561. Asp-602, Ile-603, Gly-621, and Asp-623 together coordinate Ca(2+).

Requires Ca(2+) as cofactor. Post-translationally, N-glycosylated.

It localises to the secreted. It is found in the extracellular space. It catalyses the reaction Release of an N-terminal tripeptide from a polypeptide.. Secreted tripeptidyl-peptidase which degrades proteins at acidic pHs and is involved in virulence. This is Tripeptidyl-peptidase sed1 (sed1) from Aspergillus fumigatus (strain ATCC MYA-4609 / CBS 101355 / FGSC A1100 / Af293) (Neosartorya fumigata).